We begin with the raw amino-acid sequence, 185 residues long: Ribosome-recycling factor (185 aa).

The protein belongs to the RRF family.

It localises to the cytoplasm. Its function is as follows. Responsible for the release of ribosomes from messenger RNA at the termination of protein biosynthesis. May increase the efficiency of translation by recycling ribosomes from one round of translation to another. This is Ribosome-recycling factor from Francisella philomiragia subsp. philomiragia (strain ATCC 25017 / CCUG 19701 / FSC 153 / O#319-036).